The following is a 386-amino-acid chain: Methylthioribose-1-phosphate isomerase (386 aa).

Aspartate 261 serves as the catalytic Proton donor.

This sequence belongs to the eIF-2B alpha/beta/delta subunits family. MtnA subfamily.

It localises to the cytoplasm. The protein resides in the nucleus. It carries out the reaction 5-(methylsulfanyl)-alpha-D-ribose 1-phosphate = 5-(methylsulfanyl)-D-ribulose 1-phosphate. The protein operates within amino-acid biosynthesis; L-methionine biosynthesis via salvage pathway; L-methionine from S-methyl-5-thio-alpha-D-ribose 1-phosphate: step 1/6. In terms of biological role, catalyzes the interconversion of methylthioribose-1-phosphate (MTR-1-P) into methylthioribulose-1-phosphate (MTRu-1-P). This chain is Methylthioribose-1-phosphate isomerase, found in Paracoccidioides brasiliensis (strain Pb03).